The chain runs to 760 residues: ATP-dependent DNA helicase Hel308 (760 aa).

Residues Q28 and 46 to 53 (IPTASGKT) contribute to the ATP site. The 167-residue stretch at 33-199 (EMGLLEKKNL…WLGAALVLSE (167 aa)) folds into the Helicase ATP-binding domain. The DEAH box motif lies at 144–147 (DEIH). The Helicase C-terminal domain occupies 232-426 (AVNLVLDTIK…SKLGTENALR (195 aa)).

The protein belongs to the helicase family. Hel308 subfamily. Monomer.

The enzyme catalyses Couples ATP hydrolysis with the unwinding of duplex DNA by translocating in the 3'-5' direction.. It carries out the reaction ATP + H2O = ADP + phosphate + H(+). Its function is as follows. DNA-dependent ATPase and 3'-5' DNA helicase that may be involved in repair of stalled replication forks. This Methanococcoides burtonii (strain DSM 6242 / NBRC 107633 / OCM 468 / ACE-M) protein is ATP-dependent DNA helicase Hel308.